Consider the following 101-residue polypeptide: Apolipoprotein C-II (101 aa).

An N-terminal signal peptide occupies residues 1–22 (MGIRYLLVLVLVLLVLGCEVQG). Positions 23–28 (AHMPQQ) are excised as a propeptide. A lipid binding region spans residues 66–74 (TMDEKIREI). The lipoprotein lipase cofactor stretch occupies residues 78–101 (STAAVSTYAGIFTDQLLSMLKGDQ).

The protein belongs to the apolipoprotein C2 family. Proapolipoprotein C-II is synthesized as a sialic acid containing glycoprotein which is subsequently desialylated prior to its proteolytic processing. Post-translationally, proapolipoprotein C-II, the major form found in plasma undergoes proteolytic cleavage of its N-terminal hexapeptide to generate apolipoprotein C-II, which occurs as the minor form in plasma.

It localises to the secreted. In terms of biological role, component of chylomicrons, very low-density lipoproteins (VLDL), low-density lipoproteins (LDL), and high-density lipoproteins (HDL) in plasma. Plays an important role in lipoprotein metabolism as an activator of lipoprotein lipase. Both proapolipoprotein C-II and apolipoprotein C-II can activate lipoprotein lipase. This Neomonachus schauinslandi (Hawaiian monk seal) protein is Apolipoprotein C-II (APOC2).